The chain runs to 362 residues: RING finger protein 32 (362 aa).

An RING-type 1; atypical zinc finger spans residues 127–169 (CPICKEEFELRPQVLLSCSHVFHKACLQAFEKFTNKKTCPLCR). The 30-residue stretch at 186–215 (RIKCVTRIQAYWRGCVVRKWYRNLRKTVPP) folds into the IQ domain. An RING-type 2; atypical zinc finger spans residues 293-352 (CSICLAPLSAAGGQRVGAGRRSREMALLSCSHVFHHACLLALEEFSVGDRPPFHACPLCR).

As to expression, highly expressed in testis, less abundant in ovary.

The protein localises to the cytoplasm. Its function is as follows. May play a role in sperm formation. This Homo sapiens (Human) protein is RING finger protein 32 (RNF32).